The sequence spans 489 residues: Endothelial zinc finger protein induced by tumor necrosis factor alpha (489 aa).

Positions 1-15 are enriched in basic and acidic residues; it reads MKELDPKNDISEDKL. 2 disordered regions span residues 1 to 61 and 98 to 122; these read MKEL…PLGI and EKGA…KPPM. 13 C2H2-type zinc fingers span residues 130–152, 158–180, 186–208, 214–236, 242–264, 270–292, 298–320, 326–348, 354–376, 382–404, 410–432, 438–460, and 466–488; these read YDCS…QRIH, FECD…QRVH, YACG…QRTH, YVCD…ERIH, YVCP…QRTH, YACK…QRNH, YVCG…QRFH, FECS…QRIH, YECY…QIVH, YVCG…QRIH, YRCG…QRIH, and YRCG…LRIH.

Belongs to the krueppel C2H2-type zinc-finger protein family. As to expression, highly expressed in placenta, followed by brain, testis, pancreas, heart, small intestine, muscle, uterus, prostate and peripheral blood leukocytes. Not detected in liver, lung, colon, stomach, salivary and thyroid gland.

It localises to the nucleus. May be involved in transcriptional regulation. In Homo sapiens (Human), this protein is Endothelial zinc finger protein induced by tumor necrosis factor alpha (ZNF71).